We begin with the raw amino-acid sequence, 333 residues long: Putative ketol-acid reductoisomerase 2 (333 aa).

Residues 1–182 form the KARI N-terminal Rossmann domain; sequence MDKTVLDANL…AIPGGIAVIS (182 aa). Residues 183 to 329 form the KARI C-terminal knotted domain; that stretch reads SFEEEALLDL…KELYKLLGRK (147 aa).

This sequence belongs to the ketol-acid reductoisomerase family.

The enzyme catalyses (2R)-2,3-dihydroxy-3-methylbutanoate + NADP(+) = (2S)-2-acetolactate + NADPH + H(+). The catalysed reaction is (2R,3R)-2,3-dihydroxy-3-methylpentanoate + NADP(+) = (S)-2-ethyl-2-hydroxy-3-oxobutanoate + NADPH + H(+). It functions in the pathway amino-acid biosynthesis; L-isoleucine biosynthesis; L-isoleucine from 2-oxobutanoate: step 2/4. The protein operates within amino-acid biosynthesis; L-valine biosynthesis; L-valine from pyruvate: step 2/4. This is Putative ketol-acid reductoisomerase 2 (ilvC2) from Saccharolobus solfataricus (strain ATCC 35092 / DSM 1617 / JCM 11322 / P2) (Sulfolobus solfataricus).